Reading from the N-terminus, the 311-residue chain is Ciliary microtubule inner protein 2B (311 aa).

2 disordered regions span residues 64–93 (PFPPAPRGHSYNEASQELGGRRRRQRLGDP) and 150–183 (QEGRQPQTEHEKQLLTARHRTPLPALSKEPAPFM).

The protein belongs to the CIMIP2 family. Expressed in airway epithelial cells.

Its subcellular location is the cytoplasm. The protein localises to the cytoskeleton. It localises to the cilium axoneme. Functionally, microtubule inner protein (MIP) part of the dynein-decorated doublet microtubules (DMTs) in cilia axoneme, which is required for motile cilia beating. In Xenopus laevis (African clawed frog), this protein is Ciliary microtubule inner protein 2B (cimip2b).